The primary structure comprises 1013 residues: Ephrin type-B receptor 6 (1013 aa).

Residues 1–31 form the signal peptide; it reads MASENTAGSGSRVAGMVYSLWLLVLGPSVLA. Over 32 to 590 the chain is Extracellular; sequence LEEVLLDTTG…LPEKLSLVIG (559 aa). In terms of domain architecture, Eph LBD spans 33-231; the sequence is EEVLLDTTGE…FSYTCPSVLR (199 aa). 2 Fibronectin type-III domains span residues 363-478 and 479-574; these read PPSA…TSHE and VPSA…TLPQ. The N-linked (GlcNAc...) asparagine glycan is linked to Asn-472. A helical transmembrane segment spans residues 591-611; that stretch reads SILGALAFLLLAAITVLAVIF. The Cytoplasmic portion of the chain corresponds to 612–1013; it reads QRKRRGTGYT…HLRQPGSVEV (402 aa). Positions 662–911 constitute a Protein kinase domain; the sequence is IKIEEVIGAG…QLVAAFDKMI (250 aa). Residue 668-676 participates in ATP binding; the sequence is IGAGSFGEV. Positions 940–1004 constitute an SAM domain; sequence PCLDSPQAWL…LHNIQLLQQH (65 aa). Positions 1011–1013 match the PDZ-binding motif; sequence VEV.

It belongs to the protein kinase superfamily. Tyr protein kinase family. Ephrin receptor subfamily. As to quaternary structure, interacts with CBL and EPHB1. Interacts with FYN; this interaction takes place in a ligand-independent manner. Ligand-binding increases phosphorylation on tyrosine residues. Phosphorylation on tyrosine residues is mediated by transphosphorylation by the catalytically active EPHB1 in a ligand-independent manner. Tyrosine phosphorylation of the receptor may act as a switch on the functional transition from cell adhesion/attraction to de-adhesion/repulsion.

It localises to the membrane. Its function is as follows. Kinase-defective receptor for members of the ephrin-B family. Binds to ephrin-B1 and ephrin-B2. Modulates cell adhesion and migration by exerting both positive and negative effects upon stimulation with ephrin-B2. Inhibits JNK activation, T-cell receptor-induced IL-2 secretion and CD25 expression upon stimulation with ephrin-B2. The sequence is that of Ephrin type-B receptor 6 (Ephb6) from Rattus norvegicus (Rat).